The following is a 603-amino-acid chain: Mitochondrial distribution and morphology protein 34 (603 aa).

Positions 1-205 (MAFNFNWSPL…SPEYQEIETE (205 aa)) constitute an SMP-LTD domain. Positions 320 to 332 (KSGASSVASGSTG) are enriched in low complexity. Disordered regions lie at residues 320-511 (KSGA…PLLR) and 558-603 (IARK…AYVA). The segment covering 333-351 (NETLSSRPTLASSYSTSAG) has biased composition (polar residues). Residues 371-380 (VVDLRRKDGA) show a composition bias toward basic and acidic residues. The span at 383 to 403 (GVSTEANTPLPSTQVSDTSSV) shows a compositional bias: polar residues. The span at 452-463 (PLLAPAPLIPNA) shows a compositional bias: low complexity. Residues 500–509 (RQAQQSTSPL) are compositionally biased toward polar residues. Basic and acidic residues predominate over residues 558–570 (IARKVQEEKDKSS).

It belongs to the MDM34 family. In terms of assembly, component of the ER-mitochondria encounter structure (ERMES) or MDM complex, composed of mmm1, mdm10, mdm12 and mdm34.

The protein resides in the mitochondrion outer membrane. Functionally, component of the ERMES/MDM complex, which serves as a molecular tether to connect the endoplasmic reticulum (ER) and mitochondria. Components of this complex are involved in the control of mitochondrial shape and protein biogenesis, and function in nonvesicular lipid trafficking between the ER and mitochondria. Mdm34 is required for the interaction of the ER-resident membrane protein mmm1 and the outer mitochondrial membrane-resident beta-barrel protein mdm10. The sequence is that of Mitochondrial distribution and morphology protein 34 from Pyrenophora tritici-repentis (strain Pt-1C-BFP) (Wheat tan spot fungus).